A 124-amino-acid chain; its full sequence is Small ribosomal subunit protein uS12 (124 aa).

Asp89 carries the 3-methylthioaspartic acid modification. The disordered stretch occupies residues 105-124; sequence TGVDSRMQGRSKYGTKKPKK.

This sequence belongs to the universal ribosomal protein uS12 family. In terms of assembly, part of the 30S ribosomal subunit. Contacts proteins S8 and S17. May interact with IF1 in the 30S initiation complex.

With S4 and S5 plays an important role in translational accuracy. Functionally, interacts with and stabilizes bases of the 16S rRNA that are involved in tRNA selection in the A site and with the mRNA backbone. Located at the interface of the 30S and 50S subunits, it traverses the body of the 30S subunit contacting proteins on the other side and probably holding the rRNA structure together. The combined cluster of proteins S8, S12 and S17 appears to hold together the shoulder and platform of the 30S subunit. The polypeptide is Small ribosomal subunit protein uS12 (Vesicomyosocius okutanii subsp. Calyptogena okutanii (strain HA)).